A 127-amino-acid chain; its full sequence is Small ribosomal subunit protein eS8 (127 aa).

Residues 1 to 33 (MAIWQGKSMKKPSGGRAKMNRGKRKYELGREPA) are disordered.

Belongs to the eukaryotic ribosomal protein eS8 family. Part of the 30S ribosomal subunit.

The sequence is that of Small ribosomal subunit protein eS8 (rps8e) from Methanothermobacter thermautotrophicus (strain ATCC 29096 / DSM 1053 / JCM 10044 / NBRC 100330 / Delta H) (Methanobacterium thermoautotrophicum).